We begin with the raw amino-acid sequence, 139 residues long: Chorion protein S16 (139 aa).

An N-terminal signal peptide occupies residues 1-21; it reads MSVNYMRLLCLMACCFSVCLA.

It belongs to the chorion protein S16 family.

The protein resides in the secreted. Chorion membrane (egg shell) protein; plays a role in protecting the egg from the environment. The protein is Chorion protein S16 (Cp16) of Drosophila virilis (Fruit fly).